Reading from the N-terminus, the 114-residue chain is uncharacterized protein (114 aa).

The HIT domain occupies 6–114 (IFSKIIRREI…GGRPFSWPPG (109 aa)). A Histidine triad motif motif is present at residues 98–102 (HLHLH).

This is an uncharacterized protein from Synechocystis sp. (strain ATCC 27184 / PCC 6803 / Kazusa).